Here is a 334-residue protein sequence, read N- to C-terminus: Holliday junction branch migration complex subunit RuvB (334 aa).

Residues 4 to 186 are large ATPase domain (RuvB-L); sequence ADRLIAPENP…FGITQRLEYY (183 aa). ATP-binding positions include Ile25, Arg26, Gly67, Lys70, Thr71, Thr72, 133-135, Arg176, Tyr186, and Arg223; that span reads EDY. Thr71 is a binding site for Mg(2+). A small ATPAse domain (RuvB-S) region spans residues 187–257; that stretch reads KVKDLQDIVQ…TADKALNMLD (71 aa). The tract at residues 260–334 is head domain (RuvB-H); it reads AEGFDYMDRK…RAYLHFGIEK (75 aa). Arg315 and Arg320 together coordinate DNA.

This sequence belongs to the RuvB family. Homohexamer. Forms an RuvA(8)-RuvB(12)-Holliday junction (HJ) complex. HJ DNA is sandwiched between 2 RuvA tetramers; dsDNA enters through RuvA and exits via RuvB. An RuvB hexamer assembles on each DNA strand where it exits the tetramer. Each RuvB hexamer is contacted by two RuvA subunits (via domain III) on 2 adjacent RuvB subunits; this complex drives branch migration. In the full resolvosome a probable DNA-RuvA(4)-RuvB(12)-RuvC(2) complex forms which resolves the HJ.

The protein localises to the cytoplasm. The enzyme catalyses ATP + H2O = ADP + phosphate + H(+). Its function is as follows. The RuvA-RuvB-RuvC complex processes Holliday junction (HJ) DNA during genetic recombination and DNA repair, while the RuvA-RuvB complex plays an important role in the rescue of blocked DNA replication forks via replication fork reversal (RFR). RuvA specifically binds to HJ cruciform DNA, conferring on it an open structure. The RuvB hexamer acts as an ATP-dependent pump, pulling dsDNA into and through the RuvAB complex. RuvB forms 2 homohexamers on either side of HJ DNA bound by 1 or 2 RuvA tetramers; 4 subunits per hexamer contact DNA at a time. Coordinated motions by a converter formed by DNA-disengaged RuvB subunits stimulates ATP hydrolysis and nucleotide exchange. Immobilization of the converter enables RuvB to convert the ATP-contained energy into a lever motion, pulling 2 nucleotides of DNA out of the RuvA tetramer per ATP hydrolyzed, thus driving DNA branch migration. The RuvB motors rotate together with the DNA substrate, which together with the progressing nucleotide cycle form the mechanistic basis for DNA recombination by continuous HJ branch migration. Branch migration allows RuvC to scan DNA until it finds its consensus sequence, where it cleaves and resolves cruciform DNA. This chain is Holliday junction branch migration complex subunit RuvB, found in Vibrio campbellii (strain ATCC BAA-1116).